The following is a 1025-amino-acid chain: Multidrug resistance protein MdtC (1025 aa).

12 helical membrane passes run Phe-3 to Leu-23, Glu-333 to Leu-353, Leu-360 to Cys-380, Leu-387 to Leu-407, Val-431 to Leu-451, Phe-463 to Pro-483, Ile-528 to Pro-548, Val-853 to Ser-873, Val-875 to Leu-895, Leu-897 to Val-917, Pro-953 to Gly-973, and Ile-984 to Val-1004.

It belongs to the resistance-nodulation-cell division (RND) (TC 2.A.6) family. MdtC subfamily. In terms of assembly, part of a tripartite efflux system composed of MdtA, MdtB and MdtC. MdtC forms a heteromultimer with MdtB.

It localises to the cell inner membrane. This Enterobacter sp. (strain 638) protein is Multidrug resistance protein MdtC.